The following is a 449-amino-acid chain: Asparagine--tRNA ligase (449 aa).

The protein belongs to the class-II aminoacyl-tRNA synthetase family. As to quaternary structure, homodimer.

It is found in the cytoplasm. The enzyme catalyses tRNA(Asn) + L-asparagine + ATP = L-asparaginyl-tRNA(Asn) + AMP + diphosphate + H(+). The polypeptide is Asparagine--tRNA ligase (Mesomycoplasma hyopneumoniae (strain 7448) (Mycoplasma hyopneumoniae)).